The sequence spans 107 residues: Putative pterin-4-alpha-carbinolamine dehydratase (107 aa).

Belongs to the pterin-4-alpha-carbinolamine dehydratase family.

It carries out the reaction (4aS,6R)-4a-hydroxy-L-erythro-5,6,7,8-tetrahydrobiopterin = (6R)-L-erythro-6,7-dihydrobiopterin + H2O. This Rubrobacter xylanophilus (strain DSM 9941 / JCM 11954 / NBRC 16129 / PRD-1) protein is Putative pterin-4-alpha-carbinolamine dehydratase.